The primary structure comprises 278 residues: Envelope glycoprotein L (278 aa).

Positions 1–30 (MCRRPDCGFSFSPGPVILLWCCLLLPIVSS) are cleaved as a signal peptide. The gL betaherpesvirus-type domain occupies 43-256 (VPAECPELTR…DKYYAGLPPE (214 aa)). Cys-154 and Cys-159 form a disulfide bridge.

Belongs to the herpesviridae glycoprotein L (gL) family. Betaherpesvirinae gL subfamily. In terms of assembly, interacts with glycoprotein H (gH); this interaction is necessary for the correct processing and cell surface expression of gH. Forms the envelope pentamer complex (PC) composed of gH, gL, UL128, UL130, and UL131A. The pentamer interacts with host NRP2. Forms the envelope trimer complex composed of gH, gL, and gO. The trimer interacts with host PDGFRA. The trimer also interacts with host EPHA2.

The protein resides in the virion membrane. The protein localises to the host cell membrane. It localises to the host Golgi apparatus. It is found in the host trans-Golgi network. Functionally, the heterodimer glycoprotein H-glycoprotein L is required for the fusion of viral and plasma membranes leading to virus entry into the host cell. Acts as a functional inhibitor of gH and maintains gH in an inhibited form. Upon binding to host integrins, gL dissociates from gH leading to activation of the viral fusion glycoproteins gB and gH. In human cytomegalovirus, forms two distincts complexes to mediate viral entry, a trimer and a pentamer at the surface of the virion envelope. The gH-gL-gO trimer is required for infection in fibroblasts by interacting with host PDGFRA, and in glioblastoma cells by interacting with host EPHA2. The gH-gL-UL128-UL130-UL131A pentamer is essential for viral entry in epithelial, endothelial and myeloid cells via interaction with host NRP2. The polypeptide is Envelope glycoprotein L (Homo sapiens (Human)).